A 747-amino-acid chain; its full sequence is MDIASPPTSKCITYWKRKVKSEYMRLRQLKRLQANMGAKALYVANFAKVQEKTQILNEEWKKLRVQPVQPMKPVSGHPFLKKCTIESIFPGFDSQDMLMRSLNTVALVPIMYSWSPLQQNFMVEDETVLCNIPYMGDEVKEEDETFIEELINNYDGKVHGEEEMIPGSVLISDAVFLELVDALNQYSDEEEDGHNDPSDGKQDDSKEDLPVTRKRKRHAIEGNKKSSKKQFPNDMIFSAIASMFPENGVPDDMKERYRELTEMSDPNALPPQCTPNIDGPNAKSVQREQSLHSFHTLFCRRCFKYDCFLHPFHATPNVYKRKNKEIKIEPEPCGTDCFLLLEGAKEYAMLHNPRSKCSGRRRRRHPVVSASCSNASASAMAETKEGDSDRDTGNDWASSSSEANSRCQTPTKQKASPAPAQLCVVEAPSEPVEWTGAEESLFRVFHGTYFNNFCSIARLLGTKTCKQVFQFAVKESLILKLPTDELMNPAQKKKRKHRLWAAHCRKIQLKKDNNSTQVYNYQPCDHPDRPCDSTCPCIMTQNFCEKFCQCSPDCQNRFPGCRCKTQCNTKQCPCYLAVRECDPDLCLTCGASEHWDCKVVSCKNCSIQRGLKKHLLLAPSDVAGWGTFIKESVQKNEFISEYCGELISQDEADRRGKVYDKYMSSFLFNLNNDFVVDATRKGNKIRFANHSVNPNCYAKVVMVNGDHRIGIFAKRAIQAGEELFFDYRYSQADALKYVGIERETDVF.

Residues 188–231 are disordered; that stretch reads DEEEDGHNDPSDGKQDDSKEDLPVTRKRKRHAIEGNKKSSKKQF. Basic and acidic residues predominate over residues 194–211; it reads HNDPSDGKQDDSKEDLPV. Lys-327 participates in a covalent cross-link: Glycyl lysine isopeptide (Lys-Gly) (interchain with G-Cter in SUMO2). The interval 368-414 is disordered; sequence VSASCSNASASAMAETKEGDSDRDTGNDWASSSSEANSRCQTPTKQK. Low complexity predominate over residues 369–381; that stretch reads SASCSNASASAMA. Over residues 382-393 the composition is skewed to basic and acidic residues; sequence ETKEGDSDRDTG. Residues 395–414 are compositionally biased toward polar residues; that stretch reads DWASSSSEANSRCQTPTKQK. A Nuclear localization signal motif is present at residues 491 to 496; the sequence is QKKKRK. In terms of domain architecture, CXC spans 504-606; the sequence is CRKIQLKKDN…CKVVSCKNCS (103 aa). The SET domain maps to 613–728; sequence KHLLLAPSDV…AGEELFFDYR (116 aa).

It belongs to the class V-like SAM-binding methyltransferase superfamily. Histone-lysine methyltransferase family. EZ subfamily. As to quaternary structure, component of the PRC2/EED-EZH1 complex, which includes EED, EZH1, SUZ12, RBBP4 and AEBP2. The PRC2/EED-EZH1 is less abundant than the PRC2/EED-EZH2 complex, has weak methyltransferase activity and compacts chromatin in the absence of the methyltransferase cofactor S-adenosyl-L-methionine (SAM). Interacts with EZHIP; the interaction blocks EZH1 methyltransferase activity. Expressed at high levels in kidney, adrenal gland, testis and brain.

It is found in the nucleus. It catalyses the reaction L-lysyl(27)-[histone H3] + 3 S-adenosyl-L-methionine = N(6),N(6),N(6)-trimethyl-L-lysyl(27)-[histone H3] + 3 S-adenosyl-L-homocysteine + 3 H(+). In terms of biological role, polycomb group (PcG) protein. Catalytic subunit of the PRC2/EED-EZH1 complex, which methylates 'Lys-27' of histone H3, leading to transcriptional repression of the affected target gene. Able to mono-, di- and trimethylate 'Lys-27' of histone H3 to form H3K27me1, H3K27me2 and H3K27me3, respectively. Required for embryonic stem cell derivation and self-renewal, suggesting that it is involved in safeguarding embryonic stem cell identity. Compared to EZH2-containing complexes, it is less abundant in embryonic stem cells, has weak methyltransferase activity and plays a less critical role in forming H3K27me3, which is required for embryonic stem cell identity and proper differentiation. The sequence is that of Histone-lysine N-methyltransferase EZH1 (Ezh1) from Mus musculus (Mouse).